The following is a 149-amino-acid chain: HMG1/2-like protein (149 aa).

2 stretches are compositionally biased toward basic and acidic residues: residues 1–15 and 35–44; these read MKGG…KAET and KGKEPKDPNK. 2 disordered regions span residues 1-52 and 112-149; these read MKGG…PSAF and AYNK…EDDD. A DNA-binding region (HMG box) is located at residues 45–114; that stretch reads PKRPPSAFFV…EYEITLQAYN (70 aa). Residues 134–149 show a composition bias toward acidic residues; it reads NDEDEDEEDEEDEDDD.

This sequence belongs to the HMGB family.

It is found in the nucleus. This Vicia faba (Broad bean) protein is HMG1/2-like protein.